We begin with the raw amino-acid sequence, 199 residues long: Early nodulin-like protein 3 (199 aa).

The first 23 residues, 1–23, serve as a signal peptide directing secretion; it reads MGLVMRFDLYLMFVMLMGLGFTI. The Phytocyanin domain occupies 27-128; it reads YKFYVGGKDG…GQKLAVKVLS (102 aa). Residues asparagine 57 and asparagine 83 are each glycosylated (N-linked (GlcNAc...) asparagine). Cysteines 82 and 116 form a disulfide. A disordered region spans residues 130-180; it reads VHHSHSPRHTSPSPSPVHQELSSPGPSPGVEPSSDSNSRVPAPGPATAPNS. A compositionally biased stretch (low complexity) spans 138 to 165; it reads HTSPSPSPVHQELSSPGPSPGVEPSSDS. Asparagine 179 carries the GPI-anchor amidated asparagine lipid modification. A propeptide spans 180 to 199 (removed in mature form); it reads SAGLVGPGMVVLVIMISSLF.

It belongs to the early nodulin-like (ENODL) family. Confined to flowers.

The protein localises to the cell membrane. May act as a carbohydrate transporter. The chain is Early nodulin-like protein 3 from Arabidopsis thaliana (Mouse-ear cress).